The primary structure comprises 487 residues: Aspyridones efflux protein apdF (487 aa).

Residues Met-1–Glu-21 show a composition bias toward basic and acidic residues. The segment at Met-1–Phe-25 is disordered. A helical membrane pass occupies residues Val-35–Val-55. Asn-67 is a glycosylation site (N-linked (GlcNAc...) asparagine). 8 helical membrane passes run Trp-75–Phe-95, Gly-99–Leu-119, Phe-126–Leu-146, Ala-159–Leu-179, Trp-191–Ile-211, Val-234–Leu-254, Gly-262–Gly-282, and Ile-293–Trp-313. Asn-319 is a glycosylation site (N-linked (GlcNAc...) asparagine). A run of 3 helical transmembrane segments spans residues Ile-322 to Ala-342, Ile-354 to Pro-374, and Gly-385 to Phe-405.

It belongs to the major facilitator superfamily. Monocarboxylate porter (TC 2.A.1.13) family.

The protein localises to the cell membrane. Its function is as follows. Efflux pump that may be involved in the secretion of aspyridones. The polypeptide is Aspyridones efflux protein apdF (Emericella nidulans (strain FGSC A4 / ATCC 38163 / CBS 112.46 / NRRL 194 / M139) (Aspergillus nidulans)).